Reading from the N-terminus, the 792-residue chain is Phosphoenolpyruvate synthase (792 aa).

His421 (tele-phosphohistidine intermediate) is an active-site residue. Positions 511, 578, 680, 701, 702, 703, and 704 each coordinate substrate. Residue Glu680 participates in Mg(2+) binding. Position 704 (Asp704) interacts with Mg(2+). The active-site Proton donor is the Cys751.

It belongs to the PEP-utilizing enzyme family. In terms of assembly, homodimer. It depends on Mg(2+) as a cofactor.

The catalysed reaction is pyruvate + ATP + H2O = phosphoenolpyruvate + AMP + phosphate + 2 H(+). It functions in the pathway carbohydrate biosynthesis; gluconeogenesis. Its activity is regulated as follows. Activated by a Pi-dependent pyrophosphorylation and inactivated by an ADP-dependent phosphorylation on a regulatory threonine. Both reactions are mediated by the bifunctional serine/threonine kinase and phosphorylase PpsR. Functionally, catalyzes the phosphorylation of pyruvate to phosphoenolpyruvate. This Escherichia coli (strain K12) protein is Phosphoenolpyruvate synthase (ppsA).